We begin with the raw amino-acid sequence, 1556 residues long: Ferredoxin-dependent glutamate synthase 2 (1556 aa).

Cys-37 functions as the For GATase activity in the catalytic mechanism. In terms of domain architecture, Glutamine amidotransferase type-2 spans 37 to 431; it reads CGVGFIANLR…PGQMIAVDLA (395 aa). 3 residues coordinate [3Fe-4S] cluster: Cys-1173, Cys-1179, and Cys-1184. Residues 1533–1556 are disordered; sequence PSEKDSPEANGDVSLTGEKTLTSV.

It belongs to the glutamate synthase family. Requires [3Fe-4S] cluster as cofactor. The cofactor is FAD. FMN serves as cofactor.

It carries out the reaction 2 oxidized [2Fe-2S]-[ferredoxin] + 2 L-glutamate = L-glutamine + 2 reduced [2Fe-2S]-[ferredoxin] + 2-oxoglutarate + 2 H(+). Its pathway is amino-acid biosynthesis; L-glutamate biosynthesis via GLT pathway; L-glutamate from 2-oxoglutarate and L-glutamine (ferredoxin route): step 1/1. It functions in the pathway energy metabolism; nitrogen metabolism. In Synechocystis sp. (strain ATCC 27184 / PCC 6803 / Kazusa), this protein is Ferredoxin-dependent glutamate synthase 2 (gltS).